The sequence spans 201 residues: Potassium-transporting ATPase KdpC subunit (201 aa).

Residues 10-30 traverse the membrane as a helical segment; sequence VLLVALTAVTGLAYPLAVTGI.

The protein belongs to the KdpC family. The system is composed of three essential subunits: KdpA, KdpB and KdpC.

Its subcellular location is the cell inner membrane. Part of the high-affinity ATP-driven potassium transport (or Kdp) system, which catalyzes the hydrolysis of ATP coupled with the electrogenic transport of potassium into the cytoplasm. This subunit acts as a catalytic chaperone that increases the ATP-binding affinity of the ATP-hydrolyzing subunit KdpB by the formation of a transient KdpB/KdpC/ATP ternary complex. The polypeptide is Potassium-transporting ATPase KdpC subunit (Methylorubrum extorquens (strain PA1) (Methylobacterium extorquens)).